A 331-amino-acid chain; its full sequence is METDSFKRQYADILRRYLCGISYQKLSCEYDPSIEETVVQHFRTLNFPNDFLKRMMPIIHASAWIATSTYPFTPRHVQEAIAVYTSLAIAIEDTSKESTHDLKRFQQRLFNRQPQPNLLLQAMVDCLVSLRGIYGPFICDMVAKSTAEYISVCAFEAKYDGTLRPTPSSPDFPYYLRLKTGVAEVYAFFAFPEVLYPEEAFLHEYILAVPDISRYFNLGNDLLSFYKESIVADERLNYIYNCSRVSNSTPLESIWSTHLALITCVENIRKTLSASPQMRRNIDQLINGYVMYHFGASRYKLSDLGIQEVDELRAKICCSTTVDNGVGAYKH.

It belongs to the trichodiene synthase family.

It catalyses the reaction (2E,6E)-farnesyl diphosphate = (E)-beta-farnesene + diphosphate. In terms of biological role, terpene synthase that catalyzes the conversion of (2E,6E)-farnesyl diphosphate (FPP) into the volatile sesquiterpene (E)-beta-farnesene. The protein is (E)-beta farnesene synthase MBR_03882 of Metarhizium brunneum (strain ARSEF 3297).